The primary structure comprises 199 residues: TEGGAVHTMCQYTSPQPSPNCGTYSNAHITAADKETILKVHNDERQKVKAGQETRGNPGPQPAASNMPDLTWDNELAAIAQRWVNQCKIGHDGCRNVERYQVGQNIAMSGSTAKGPCNMNNLVQMWINEVNALNAADVSSMPSDGNYFMKIGHYTQLVWGKTTKVGCGIIQFLDGKFYKCYLACNYGPAGNMFGAPIYQ.

Disulfide bonds link Cys-21/Cys-87 and Cys-167/Cys-184. Residues 38–186 enclose the SCP domain; it reads LKVHNDERQK…FYKCYLACNY (149 aa). Residues 47–67 are disordered; sequence KVKAGQETRGNPGPQPAASNM.

This sequence belongs to the CRISP family. Venom allergen 5-like subfamily. In terms of tissue distribution, expressed by the venom gland.

The protein resides in the secreted. The polypeptide is Venom allergen 5 (Brachyponera chinensis (Asian needle ant)).